We begin with the raw amino-acid sequence, 449 residues long: UPF0761 membrane protein Cpha266_1653 (449 aa).

6 consecutive transmembrane segments (helical) span residues 77 to 97, 133 to 153, 173 to 193, 214 to 234, 244 to 264, and 277 to 297; these read LLSL…FPVF, SVPL…ISTI, FTLY…SLVA, LLSF…YMLV, AVYG…WFVF, and GALS…VVVL.

This sequence belongs to the UPF0761 family.

It localises to the cell inner membrane. The sequence is that of UPF0761 membrane protein Cpha266_1653 from Chlorobium phaeobacteroides (strain DSM 266 / SMG 266 / 2430).